A 500-amino-acid polypeptide reads, in one-letter code: Probable malate:quinone oxidoreductase (500 aa).

This sequence belongs to the MQO family. Requires FAD as cofactor.

It catalyses the reaction (S)-malate + a quinone = a quinol + oxaloacetate. It functions in the pathway carbohydrate metabolism; tricarboxylic acid cycle; oxaloacetate from (S)-malate (quinone route): step 1/1. This is Probable malate:quinone oxidoreductase from Bacillus cereus (strain ZK / E33L).